The chain runs to 431 residues: tRNA(Ile)-lysidine synthase (431 aa).

26-31 is a binding site for ATP; sequence SGGIDS.

It belongs to the tRNA(Ile)-lysidine synthase family.

The protein localises to the cytoplasm. The enzyme catalyses cytidine(34) in tRNA(Ile2) + L-lysine + ATP = lysidine(34) in tRNA(Ile2) + AMP + diphosphate + H(+). Its function is as follows. Ligates lysine onto the cytidine present at position 34 of the AUA codon-specific tRNA(Ile) that contains the anticodon CAU, in an ATP-dependent manner. Cytidine is converted to lysidine, thus changing the amino acid specificity of the tRNA from methionine to isoleucine. This is tRNA(Ile)-lysidine synthase from Wolbachia sp. subsp. Brugia malayi (strain TRS).